The primary structure comprises 285 residues: Nurim (285 aa).

Over Met1–Ser16 the chain is Nuclear. The helical transmembrane segment at Leu17–Phe44 threads the bilayer. The Perinuclear space portion of the chain corresponds to Leu45 to Gln74. The helical transmembrane segment at Phe75 to Met96 threads the bilayer. Residues Ala97–Gln113 lie on the Nuclear side of the membrane. The helical transmembrane segment at Arg114–Arg130 threads the bilayer. Residues Phe131–Trp149 lie on the Perinuclear space side of the membrane. A helical transmembrane segment spans residues Ser150–Leu180. At Met181 to Leu207 the chain is on the nuclear side. Residues Tyr208–Val226 traverse the membrane as a helical segment. Residues Pro227–Asp232 lie on the Perinuclear space side of the membrane. A helical transmembrane segment spans residues Arg233–Leu250. Topologically, residues Asp251 to Asn285 are nuclear.

This sequence belongs to the nurim family.

The protein resides in the nucleus inner membrane. The polypeptide is Nurim (nrm) (Xenopus laevis (African clawed frog)).